The chain runs to 21 residues: Magainin-B1 (21 aa).

As to expression, expressed by the skin glands.

The protein localises to the secreted. Has no antimicrobial activity against tested bacteria. This is Magainin-B1 from Xenopus borealis (Kenyan clawed frog).